A 376-amino-acid polypeptide reads, in one-letter code: Alcohol dehydrogenase 1 (376 aa).

S2 carries the post-translational modification N-acetylserine. 7 residues coordinate Zn(2+): C47, H68, C98, C101, C104, C112, and C176. Residues 201-206 (GLGGVG), D225, and K230 contribute to the NAD(+) site. K235 bears the N6-succinyllysine mark. Residue 294–296 (VGV) participates in NAD(+) binding. K341 carries the post-translational modification N6-succinyllysine. NAD(+) is bound at residue R371.

This sequence belongs to the zinc-containing alcohol dehydrogenase family. Class-I subfamily. Dimer of identical or non-identical chains of three types (A, B, C), which are coded by 3 separate genes at different loci. It depends on Zn(2+) as a cofactor.

It localises to the cytoplasm. The catalysed reaction is a primary alcohol + NAD(+) = an aldehyde + NADH + H(+). The enzyme catalyses a secondary alcohol + NAD(+) = a ketone + NADH + H(+). This chain is Alcohol dehydrogenase 1 (Adh1), found in Rattus norvegicus (Rat).